A 112-amino-acid polypeptide reads, in one-letter code: Nitrogenase-stabilizing/protective protein NifW (112 aa).

Belongs to the NifW family. In terms of assembly, homotrimer; associates with NifD.

May protect the nitrogenase Fe-Mo protein from oxidative damage. The sequence is that of Nitrogenase-stabilizing/protective protein NifW from Paraburkholderia xenovorans (strain LB400).